The sequence spans 631 residues: 1-deoxy-D-xylulose-5-phosphate synthase (631 aa).

Residues His76 and 117–119 (AHS) each bind thiamine diphosphate. Mg(2+) is bound at residue Asp148. Thiamine diphosphate contacts are provided by residues 149 to 150 (GA), Asn177, Tyr284, and Glu365. Asn177 provides a ligand contact to Mg(2+).

Belongs to the transketolase family. DXPS subfamily. In terms of assembly, homodimer. It depends on Mg(2+) as a cofactor. Thiamine diphosphate is required as a cofactor.

It catalyses the reaction D-glyceraldehyde 3-phosphate + pyruvate + H(+) = 1-deoxy-D-xylulose 5-phosphate + CO2. It functions in the pathway metabolic intermediate biosynthesis; 1-deoxy-D-xylulose 5-phosphate biosynthesis; 1-deoxy-D-xylulose 5-phosphate from D-glyceraldehyde 3-phosphate and pyruvate: step 1/1. Its function is as follows. Catalyzes the acyloin condensation reaction between C atoms 2 and 3 of pyruvate and glyceraldehyde 3-phosphate to yield 1-deoxy-D-xylulose-5-phosphate (DXP). This is 1-deoxy-D-xylulose-5-phosphate synthase from Methylibium petroleiphilum (strain ATCC BAA-1232 / LMG 22953 / PM1).